The sequence spans 396 residues: Metallophosphoesterase 1 (396 aa).

The helical transmembrane segment at Thr-28–Phe-48 threads the bilayer. A divalent metal cation contacts are provided by Asp-75, Asp-117, Asn-155, His-249, His-303, and His-305. A helical transmembrane segment spans residues Thr-356–Phe-376.

It belongs to the metallophosphoesterase superfamily. MPPE1 family. In terms of assembly, interacts with GPI-anchor proteins (via the GPI portion). Interacts with TMED10. The cofactor is Mn(2+).

The protein resides in the endoplasmic reticulum-Golgi intermediate compartment membrane. In terms of biological role, metallophosphoesterase that catalyzes the removal of a side-chain ethanolamine-phosphate (EtNP) from the second mannose of the GPI-anchor protein intermediate. Participates in the glycan remodeling steps of GPI-anchor maturation to allow an efficient transport of GPI-anchor proteins from the endoplasmic reticulum to the Golgi. The protein is Metallophosphoesterase 1 of Mus musculus (Mouse).